Reading from the N-terminus, the 275-residue chain is Tryptophan synthase alpha chain (275 aa).

Catalysis depends on proton acceptor residues E49 and D60.

It belongs to the TrpA family. In terms of assembly, tetramer of two alpha and two beta chains.

The enzyme catalyses (1S,2R)-1-C-(indol-3-yl)glycerol 3-phosphate + L-serine = D-glyceraldehyde 3-phosphate + L-tryptophan + H2O. It functions in the pathway amino-acid biosynthesis; L-tryptophan biosynthesis; L-tryptophan from chorismate: step 5/5. Functionally, the alpha subunit is responsible for the aldol cleavage of indoleglycerol phosphate to indole and glyceraldehyde 3-phosphate. In Nitrosomonas europaea (strain ATCC 19718 / CIP 103999 / KCTC 2705 / NBRC 14298), this protein is Tryptophan synthase alpha chain.